We begin with the raw amino-acid sequence, 142 residues long: Large ribosomal subunit protein uL13 (142 aa).

The protein belongs to the universal ribosomal protein uL13 family. In terms of assembly, part of the 50S ribosomal subunit.

This protein is one of the early assembly proteins of the 50S ribosomal subunit, although it is not seen to bind rRNA by itself. It is important during the early stages of 50S assembly. The sequence is that of Large ribosomal subunit protein uL13 from Opitutus terrae (strain DSM 11246 / JCM 15787 / PB90-1).